We begin with the raw amino-acid sequence, 185 residues long: ATP-dependent protease subunit HslV (185 aa).

Residue Thr12 is part of the active site. Residues Ser168, Cys171, and Thr174 each coordinate Na(+).

It belongs to the peptidase T1B family. HslV subfamily. As to quaternary structure, a double ring-shaped homohexamer of HslV is capped on each side by a ring-shaped HslU homohexamer. The assembly of the HslU/HslV complex is dependent on binding of ATP.

Its subcellular location is the cytoplasm. It carries out the reaction ATP-dependent cleavage of peptide bonds with broad specificity.. Allosterically activated by HslU binding. Its function is as follows. Protease subunit of a proteasome-like degradation complex believed to be a general protein degrading machinery. The polypeptide is ATP-dependent protease subunit HslV (Jannaschia sp. (strain CCS1)).